The following is a 264-amino-acid chain: MWLGEYTWLNVFGIFLQATFIQNILLSNFLGMCSYLACSARVSTANGLGMSVALVLTVTGSINWVVHTFITGPKALTWISPSLANVNLNFLELIIFIVVIAAFTQILELLLEKVSRNLYLSLGIFLPLIAVNCAILGGVLFGITRNYPFIPMMIFSLGAGCGWWLAIVLFATIKEKLAYSDIPKNLQGMGISFITTGLIAMAFMSLTGIDISKPSAAAPTSDILETPNASSITTTNLKPVKKVRIAQQRAAKEKAINIKRGKTQ.

The next 6 helical transmembrane spans lie at 11-31 (VFGI…NFLG), 50-70 (MSVA…HTFI), 90-110 (FLEL…LELL), 123-143 (GIFL…LFGI), 149-169 (FIPM…AIVL), and 189-209 (MGIS…LTGI).

It belongs to the NqrDE/RnfAE family. In terms of assembly, composed of six subunits; NqrA, NqrB, NqrC, NqrD, NqrE and NqrF.

The protein resides in the cell inner membrane. It carries out the reaction a ubiquinone + n Na(+)(in) + NADH + H(+) = a ubiquinol + n Na(+)(out) + NAD(+). In terms of biological role, NQR complex catalyzes the reduction of ubiquinone-1 to ubiquinol by two successive reactions, coupled with the transport of Na(+) ions from the cytoplasm to the periplasm. NqrA to NqrE are probably involved in the second step, the conversion of ubisemiquinone to ubiquinol. In Chlamydia caviae (strain ATCC VR-813 / DSM 19441 / 03DC25 / GPIC) (Chlamydophila caviae), this protein is Na(+)-translocating NADH-quinone reductase subunit E.